The sequence spans 324 residues: Phospho-N-acetylmuramoyl-pentapeptide-transferase (324 aa).

9 helical membrane-spanning segments follow: residues 5–25 (VILF…PIFI), 51–71 (TPTM…IVMI), 77–97 (ISPE…LGFL), 117–137 (LIGQ…YQFA), 147–167 (VSFD…VGGS), 176–196 (LDGL…ILAW), 203–223 (VAIF…FNAH), 227–248 (VFMG…AILT), and 302–322 (VVVT…YIEV).

The protein belongs to the glycosyltransferase 4 family. MraY subfamily. It depends on Mg(2+) as a cofactor.

Its subcellular location is the cell membrane. The catalysed reaction is UDP-N-acetyl-alpha-D-muramoyl-L-alanyl-gamma-D-glutamyl-meso-2,6-diaminopimeloyl-D-alanyl-D-alanine + di-trans,octa-cis-undecaprenyl phosphate = di-trans,octa-cis-undecaprenyl diphospho-N-acetyl-alpha-D-muramoyl-L-alanyl-D-glutamyl-meso-2,6-diaminopimeloyl-D-alanyl-D-alanine + UMP. Its pathway is cell wall biogenesis; peptidoglycan biosynthesis. Catalyzes the initial step of the lipid cycle reactions in the biosynthesis of the cell wall peptidoglycan: transfers peptidoglycan precursor phospho-MurNAc-pentapeptide from UDP-MurNAc-pentapeptide onto the lipid carrier undecaprenyl phosphate, yielding undecaprenyl-pyrophosphoryl-MurNAc-pentapeptide, known as lipid I. The chain is Phospho-N-acetylmuramoyl-pentapeptide-transferase from Bacillus pumilus (strain SAFR-032).